The chain runs to 345 residues: Serine proteinase inhibitor 2 (345 aa).

This sequence belongs to the serpin family. Poxviruses subfamily.

It localises to the host cytoplasm. Functionally, viral serpin that inhibits both cysteine and serine proteinases involved in the regulation of host inflammatory and apoptosis processes. Major anti-apoptotic protein which inhibits both intrinsic and extrinsic pathways and strongly cleaves host CASP1 and CASP8 but is a rather poor inhibitor of host CASP3. Prevents the proteolytic activity of host interleukin-1-beta converting enzyme (ICE) and ICE-like enzymes. Can also block apoptosis through host tumor necrosis factor (TNF) receptor. The inhibition of host ICE is an example of a 'cross-class' interaction, in which a serpin inhibits a non-serine proteinase. Also inhibits granzyme B. The polypeptide is Serine proteinase inhibitor 2 (OPG199) (Vaccinia virus (strain Western Reserve) (VACV)).